The sequence spans 64 residues: Large ribosomal subunit protein uL29 (64 aa).

This sequence belongs to the universal ribosomal protein uL29 family.

This Acaryochloris marina (strain MBIC 11017) protein is Large ribosomal subunit protein uL29.